The following is a 628-amino-acid chain: Chaperone protein HtpG (628 aa).

The a; substrate-binding stretch occupies residues 1–339; the sequence is MSNNQQTLGF…SNDLPLNVSR (339 aa). Residues 340–556 form a b region; sequence EILQDNKTTA…NDQMTTQMAK (217 aa). Residues 557–628 form a c region; the sequence is LFAMSGQPVP…IKRVNTLLAG (72 aa).

The protein belongs to the heat shock protein 90 family. As to quaternary structure, homodimer.

The protein localises to the cytoplasm. In terms of biological role, molecular chaperone. Has ATPase activity. The sequence is that of Chaperone protein HtpG from Actinobacillus succinogenes (strain ATCC 55618 / DSM 22257 / CCUG 43843 / 130Z).